Consider the following 945-residue polypeptide: Xylosyltransferase 1 (945 aa).

Residues 1–17 (MQAAPCARRLARRSHSA) lie on the Cytoplasmic side of the membrane. The helical; Signal-anchor for type II membrane protein transmembrane segment at 18-38 (LLAALTVLLLQTLVVWNFSSL) threads the bilayer. The Lumenal segment spans residues 39–945 (DSGAGERRGG…GAVKPDGRLR (907 aa)). The interval 42–245 (AGERRGGAAV…KYDQPPKCDI (204 aa)) is disordered. A compositionally biased stretch (gly residues) spans 76–103 (RGGGGGGGGCGGGGRGPQARARGGGPGE). Positions 131 to 147 (KVRTDSNNENSVPKDFE) are enriched in basic and acidic residues. The segment covering 149 to 158 (VDNSNFAPRT) has biased composition (polar residues). Basic and acidic residues predominate over residues 163–190 (HQPELAKKPPSRQKELLKRKLEQQEKGK). An N-linked (GlcNAc...) asparagine glycan is attached at N212. Residues 235–245 (TKYDQPPKCDI) show a composition bias toward basic and acidic residues. Disulfide bonds link C243–C271, C287–C528, C547–C560, and C549–C558. UDP-alpha-D-xylose-binding positions include V319, D347, and 376–378 (TIW). N-linked (GlcNAc...) asparagine glycosylation is present at N407. 480-481 (DW) serves as a coordination point for UDP-alpha-D-xylose. UDP-alpha-D-xylose contacts are provided by residues S561 and 584–585 (RK). Disulfide bonds link C661–C913 and C906–C919. Residue N763 is glycosylated (N-linked (GlcNAc...) asparagine). A disordered region spans residues 926-945 (SFSPDPKSELGAVKPDGRLR).

It belongs to the glycosyltransferase 14 family. XylT subfamily. As to quaternary structure, monomer. A divalent metal cation is required as a cofactor. Post-translationally, contains 7 disulfide bonds. N-glycosylated.

It is found in the golgi apparatus membrane. It carries out the reaction UDP-alpha-D-xylose + L-seryl-[protein] = 3-O-(beta-D-xylosyl)-L-seryl-[protein] + UDP + H(+). It participates in glycan metabolism; chondroitin sulfate biosynthesis. Its pathway is glycan metabolism; heparan sulfate biosynthesis. Catalyzes the first step in the biosynthesis of chondroitin sulfate and dermatan sulfate proteoglycans, such as DCN. Transfers D-xylose from UDP-D-xylose to specific serine residues of the core protein. Required for normal maturation of chondrocytes during bone development, normal onset of ossification and normal embryonic and postnatal skeleton development, especially of the long bones. The chain is Xylosyltransferase 1 (XYLT1) from Pan troglodytes (Chimpanzee).